We begin with the raw amino-acid sequence, 366 residues long: MYMFLVKWQDLSEKVVYRRFTEIYEFHKTLKEMFPIEAGAINPENRIIPHLPAPKWFDGQRAAENHQGTLTEYCSTLMSLPTKISRCPHLLDFFKVRPDDLKLPTDNQTKKPETYLMPKDGKSTATDITGPIILQTYRAIADYEKTSGSEMALSTGDVVEVVEKSESGWWFCQMKAKRGWIPASFLEPLDSPDETEDPEPNYAGEPYVAIKAYTAVEGDEVSLLEGEAVEVIHKLLDGWWVIRKDDVTGYFPSMYLQKSGQDVSQAQRQIKRGAPPRRSSIRNAHSIHQRSRKRLSQDAYRRNSVRFLQQRRRQARPGPQSPGSPLEEERQTQRSKPQPAVPPRPSADLILNRCSESTKRKLASAV.

Residues 1 to 101 enclose the PX domain; that stretch reads MYMFLVKWQD…DFFKVRPDDL (101 aa). SH3 domains are found at residues 132 to 191 and 202 to 261; these read IILQ…PLDS and YAGE…KSGQ. A disordered region spans residues 261-366; sequence QDVSQAQRQI…STKRKLASAV (106 aa). Phosphoserine is present on residues S279 and S280. Basic residues predominate over residues 285–294; it reads HSIHQRSRKR. A phosphoserine mark is found at S296, S304, S321, and S324.

It is found in the cytoplasm. May be required for activation of the latent NADPH oxidase (necessary for superoxide production). The chain is Putative neutrophil cytosol factor 1C (NCF1C) from Homo sapiens (Human).